Consider the following 761-residue polypeptide: Cyclin-F (761 aa).

The Nuclear localization signal 1 signature appears at 19-27 (RRRIKRRPR). The region spanning 28 to 75 (VLTLLSLPEDVLLYVLECLPAVDILSMREVHPHLRSLVDSHSSVWARA) is the F-box domain. One can recognise a Cyclin N-terminal domain in the interval 300–411 (NKSSIFTTQK…EIISALEGKI (112 aa)). Short sequence motifs (d box) lie at residues 316–319 (RYIL) and 355–358 (RAKL). 2 disordered regions span residues 575-594 (NKTK…SFVT) and 677-761 (AENG…SDEL). Residues 580 to 590 (RREESIQEDRG) are compositionally biased toward basic and acidic residues. Positions 589–745 (RGSFVTTPTA…LLKASRRQVK (157 aa)) are PEST. Residues 691–718 (SSGYSSVSSGGSPTSSSSPGLPFTPTPG) are compositionally biased toward low complexity. Basic residues predominate over residues 739 to 749 (ASRRQVKRKNQ).

This sequence belongs to the cyclin family. Cyclin AB subfamily. Component of the SCF(CCNF) complex.

The protein localises to the nucleus. Its subcellular location is the cytoplasm. The protein resides in the perinuclear region. It localises to the cytoskeleton. It is found in the microtubule organizing center. The protein localises to the centrosome. Its subcellular location is the centriole. Its function is as follows. Substrate recognition component of the SCF(CCNF) E3 ubiquitin-protein ligase complex which mediates the ubiquitination and subsequent proteasomal degradation of target proteins. The SCF(CCNF) E3 ubiquitin-protein ligase complex is an integral component of the ubiquitin proteasome system (UPS) and links proteasome degradation to the cell cycle. Mediates the substrate recognition and the proteasomal degradation of various target proteins during G2 phase involved in the regulation of cell cycle progression and in the maintenance of genome stability. This Xenopus laevis (African clawed frog) protein is Cyclin-F (ccnf).